The chain runs to 262 residues: Short-chain Z-isoprenyl diphosphate synthase (262 aa).

Residue Asp-40 is part of the active site. Asp-40 is a binding site for Mg(2+). Substrate-binding positions include 41 to 44 (GNRR), Trp-45, and 86 to 88 (STE). Asn-89 (proton acceptor) is an active-site residue. Substrate is bound by residues Arg-92, Arg-211, and 217–219 (RLS). Glu-230 is a Mg(2+) binding site.

Belongs to the UPP synthase family. Z-FPP synthase subfamily. The cofactor is Mg(2+).

The catalysed reaction is isopentenyl diphosphate + (2E)-geranyl diphosphate = (2Z,6E)-farnesyl diphosphate + diphosphate. Its pathway is phospholipid metabolism; decaprenyl phosphate biosynthesis. In terms of biological role, generates Z-farnesyl diphosphate (Z-FPP) from isopentenyl pyrophosphate (IPP). Z-FPP is the precursor of decaprenyl diphosphate, which has a central role in the biosynthesis of the mycobacterial cell wall. The chain is Short-chain Z-isoprenyl diphosphate synthase from Mycobacterium leprae (strain TN).